A 702-amino-acid chain; its full sequence is p-hydroxybenzoic acid--AMP ligase FadD22 (702 aa).

A Carrier domain is found at 538 to 616 (ERHRLVLDAV…GLAQYLEAEL (79 aa)). Residue Ser-576 is modified to O-(pantetheine 4'-phosphoryl)serine.

The protein belongs to the ATP-dependent AMP-binding enzyme family.

The catalysed reaction is holo-[4-hydroxyphenylalkanoate synthase] + 4-hydroxybenzoate + ATP = 4-hydroxyphenyl-[4-hydroxyphenylalkanoate synthase] + AMP + diphosphate. The protein operates within lipid metabolism; fatty acid biosynthesis. Catalyzes the adenylation of p-hydroxybenzoic acid (pHBA) to form p-hydroxybenzoic acid-AMP (pHBA-AMP), which is converted directly to p-hydroxybenzoyl-S-FadD22 (pHBA-S-FAdD22) thioester intermediate in a CoA-independent manner by attack of the phosphopantetheine thiol of FadD22. This intermediate primes the biosynthesis of the phenolphthiocerol (PPOL) by presenting the pHBA starter unit for elongation by Pks15/1. PPOL is an important intermediate in the biosynthesis of phenolic glycolipid (mycosid B). The chain is p-hydroxybenzoic acid--AMP ligase FadD22 (fadD22) from Mycobacterium marinum (strain ATCC BAA-535 / M).